The chain runs to 262 residues: Phosphonates import ATP-binding protein PhnC (262 aa).

An ABC transporter domain is found at 5–253; the sequence is ICVEQLSKTF…RFDHLYRSIN (249 aa). 37–44 lines the ATP pocket; that stretch reads GPSGSGKS.

It belongs to the ABC transporter superfamily. Phosphonates importer (TC 3.A.1.9.1) family. The complex is composed of two ATP-binding proteins (PhnC), two transmembrane proteins (PhnE) and a solute-binding protein (PhnD).

Its subcellular location is the cell inner membrane. It carries out the reaction phosphonate(out) + ATP + H2O = phosphonate(in) + ADP + phosphate + H(+). Functionally, part of the ABC transporter complex PhnCDE involved in phosphonates import. Responsible for energy coupling to the transport system. The sequence is that of Phosphonates import ATP-binding protein PhnC from Escherichia coli O157:H7.